A 33-amino-acid chain; its full sequence is DCLGFMKPCDINNDKCCSSYVCGRNNHWCKFHL.

3 disulfide bridges follow: Cys2–Cys17, Cys9–Cys22, and Cys16–Cys29.

It belongs to the neurotoxin 10 (Hwtx-1) family. 59 (Tltx) subfamily. As to expression, expressed by the venom gland.

The protein resides in the secreted. Functionally, gating-modifier toxin that inhibits both sodium (Nav) and calcium (Cav3) channels by inducing hyperpolarizing shift in voltage-dependence of activation and steady state inactivation. Inhibits Nav1.1/SCN1A, Nav1.2/SCN2A, Nav1.6/SCN6A, Nav1.7/SCN9A and Cav3.1/CACNA1G sodium and calcium channels at nanomolar concentrations (IC(50)=169-621 nM). Surprisingly, selectively slows fast inactivation of Nav1.3/SCN3A. Also shows moderate inhibition of Nav1.3/SCN3A sodium channels (IC(50)=1216 nM). The protein is Mu/omega-theraphotoxin-Tap2a of Theraphosa apophysis (Goliath pinkfoot tarantula).